The following is a 416-amino-acid chain: 46 kDa surface antigen (416 aa).

A signal peptide spans methionine 1 to glycine 27. Cysteine 28 is lipidated: N-palmitoyl cysteine. The S-diacylglycerol cysteine moiety is linked to residue cysteine 28.

The protein localises to the cell membrane. This is 46 kDa surface antigen (p46) from Mesomycoplasma hyopneumoniae (strain 232) (Mycoplasma hyopneumoniae).